The following is a 2312-amino-acid chain: Protein Ycf2 (2312 aa).

G1630–S1637 is an ATP binding site.

It belongs to the Ycf2 family.

Its subcellular location is the plastid. The protein localises to the chloroplast stroma. Functionally, probable ATPase of unknown function. Its presence in a non-photosynthetic plant (Epifagus virginiana) and experiments in tobacco indicate that it has an essential function which is probably not related to photosynthesis. The polypeptide is Protein Ycf2 (Manihot esculenta (Cassava)).